Reading from the N-terminus, the 114-residue chain is MPKAAGDAKLLIQSLNKAYAATPTNLKIIDLYVVFAVVTALLQVVYMGIVGSFPFNSFLSGVLSCIGTAVLAVCHRIQVNKDNKEFKDLAPERAFADFVLCSLVLHLVIMNFLG.

The Cytoplasmic segment spans residues methionine 1 to aspartate 30. The chain crosses the membrane as a helical span at residues leucine 31–glycine 51. Residue serine 52 is a topological domain, lumenal. The chain crosses the membrane as a helical span at residues phenylalanine 53 to valine 73. The Cytoplasmic segment spans residues cysteine 74–arginine 93. Residues alanine 94–glycine 114 form a helical membrane-spanning segment.

This sequence belongs to the DAD/OST2 family. As to quaternary structure, component of the oligosaccharyltransferase (OST) complex.

The protein localises to the endoplasmic reticulum membrane. Its pathway is protein modification; protein glycosylation. Subunit of the oligosaccharyl transferase (OST) complex that catalyzes the initial transfer of a defined glycan (Glc(3)Man(9)GlcNAc(2) in eukaryotes) from the lipid carrier dolichol-pyrophosphate to an asparagine residue within an Asn-X-Ser/Thr consensus motif in nascent polypeptide chains, the first step in protein N-glycosylation. N-glycosylation occurs cotranslationally and the complex associates with the Sec61 complex at the channel-forming translocon complex that mediates protein translocation across the endoplasmic reticulum (ER). All subunits are required for a maximal enzyme activity. The sequence is that of Dolichyl-diphosphooligosaccharide--protein glycosyltransferase subunit DAD1 (DAD1) from Hordeum vulgare (Barley).